Here is a 94-residue protein sequence, read N- to C-terminus: Putative FXYD domain-containing ion transport regulator 8 (94 aa).

The first 18 residues, 1–18 (MEVVLIFVYSLLVPVVLA), serve as a signal peptide directing secretion. Residues 19-34 (SAAKEKEIDPFHYNYQ) are Extracellular-facing. Residues 35-58 (TLRIGGLVFDVVLFLVPSCHLLSH) traverse the membrane as a helical segment. The Cytoplasmic segment spans residues 59-94 (RCKCSFNQKPQDPGDKEAQVENFITANAKEPQKAKN). A disordered region spans residues 66–94 (QKPQDPGDKEAQVENFITANAKEPQKAKN).

Belongs to the FXYD family.

The protein localises to the membrane. This chain is Putative FXYD domain-containing ion transport regulator 8 (FXYD6P3), found in Homo sapiens (Human).